A 264-amino-acid chain; its full sequence is Thymidylate synthase (264 aa).

Position 21 (Arg21) interacts with dUMP. Residue His51 coordinates (6R)-5,10-methylene-5,6,7,8-tetrahydrofolate. 126–127 (RR) lines the dUMP pocket. The active-site Nucleophile is the Cys146. DUMP-binding positions include 166 to 169 (RSAD), Asn177, and 207 to 209 (HLY). (6R)-5,10-methylene-5,6,7,8-tetrahydrofolate is bound at residue Asp169. Residue Ser263 coordinates (6R)-5,10-methylene-5,6,7,8-tetrahydrofolate.

It belongs to the thymidylate synthase family. Bacterial-type ThyA subfamily. In terms of assembly, homodimer.

It is found in the cytoplasm. It catalyses the reaction dUMP + (6R)-5,10-methylene-5,6,7,8-tetrahydrofolate = 7,8-dihydrofolate + dTMP. The protein operates within pyrimidine metabolism; dTTP biosynthesis. Functionally, catalyzes the reductive methylation of 2'-deoxyuridine-5'-monophosphate (dUMP) to 2'-deoxythymidine-5'-monophosphate (dTMP) while utilizing 5,10-methylenetetrahydrofolate (mTHF) as the methyl donor and reductant in the reaction, yielding dihydrofolate (DHF) as a by-product. This enzymatic reaction provides an intracellular de novo source of dTMP, an essential precursor for DNA biosynthesis. The sequence is that of Thymidylate synthase from Laribacter hongkongensis (strain HLHK9).